Consider the following 294-residue polypeptide: MTARKPGWLRVNVPGGARYQQVRDTVKGLALHTVCEEAHCPNVAECWGGGTATVMLMGDVCTRGCRFCNVKTDAHPPPLDPDEPRHLAEAIAELGLDYIVVTSVDRDDLPDGGAGHFADAIRRLKDIPQLLVEVLTPDFRGDAEAVRTVGRARPDVFANNLETVRRLTPVVRDLKAGYDQTLAVLARMKREFPRIVTKSSIMVGLGETEDELLEAMGDLRAAGVEILTLGQYLRPSAWHLPVVEYVKPEKFAAWREAGLGLGFRYVASGPLVRSSYRAAELFLRGELASRPPGP.

Residues C35, C40, C46, C61, C65, C68, and S275 each contribute to the [4Fe-4S] cluster site. Residues 46–264 (CWGGGTATVM…REAGLGLGFR (219 aa)) enclose the Radical SAM core domain.

Belongs to the radical SAM superfamily. Lipoyl synthase family. [4Fe-4S] cluster serves as cofactor.

The protein resides in the cytoplasm. The catalysed reaction is [[Fe-S] cluster scaffold protein carrying a second [4Fe-4S](2+) cluster] + N(6)-octanoyl-L-lysyl-[protein] + 2 oxidized [2Fe-2S]-[ferredoxin] + 2 S-adenosyl-L-methionine + 4 H(+) = [[Fe-S] cluster scaffold protein] + N(6)-[(R)-dihydrolipoyl]-L-lysyl-[protein] + 4 Fe(3+) + 2 hydrogen sulfide + 2 5'-deoxyadenosine + 2 L-methionine + 2 reduced [2Fe-2S]-[ferredoxin]. Its pathway is protein modification; protein lipoylation via endogenous pathway; protein N(6)-(lipoyl)lysine from octanoyl-[acyl-carrier-protein]: step 2/2. Functionally, catalyzes the radical-mediated insertion of two sulfur atoms into the C-6 and C-8 positions of the octanoyl moiety bound to the lipoyl domains of lipoate-dependent enzymes, thereby converting the octanoylated domains into lipoylated derivatives. In Anaeromyxobacter sp. (strain Fw109-5), this protein is Lipoyl synthase.